Consider the following 92-residue polypeptide: Small ribosomal subunit protein uS19c (92 aa).

The protein belongs to the universal ribosomal protein uS19 family.

The protein resides in the plastid. The protein localises to the chloroplast. Its function is as follows. Protein S19 forms a complex with S13 that binds strongly to the 16S ribosomal RNA. This is Small ribosomal subunit protein uS19c from Oedogonium cardiacum (Filamentous green alga).